The chain runs to 185 residues: MKTRMIIVAAPSGAGKSSFVERITREDSRLVDIVTFTTRSIRQGETPGLQYNFIDHADFEQKIKEGFFVEWAKVHTNFYGTSYSSLETAWNQGKTAIMDIDIQGVATFKSKFPDAKTVFIHPPSIDELRRRIEKRDGKVPADIEVRMANAEKEIREASKFDYQIVNDVFEKSYGEFKKIVEDLLA.

The Guanylate kinase-like domain occupies 3 to 181 (TRMIIVAAPS…SYGEFKKIVE (179 aa)). 10-17 (APSGAGKS) lines the ATP pocket.

The protein belongs to the guanylate kinase family.

It is found in the cytoplasm. The enzyme catalyses GMP + ATP = GDP + ADP. Essential for recycling GMP and indirectly, cGMP. The sequence is that of Guanylate kinase from Bdellovibrio bacteriovorus (strain ATCC 15356 / DSM 50701 / NCIMB 9529 / HD100).